The primary structure comprises 659 residues: tRNA 5-methylaminomethyl-2-thiouridine biosynthesis bifunctional protein MnmC (659 aa).

The segment at 1-236 (MKPVMPHAQL…KWEILRGEFL (236 aa)) is tRNA (mnm(5)s(2)U34)-methyltransferase. Positions 267 to 659 (IGAGLAGCAT…FALRRLIRGK (393 aa)) are FAD-dependent cmnm(5)s(2)U34 oxidoreductase.

In the N-terminal section; belongs to the methyltransferase superfamily. tRNA (mnm(5)s(2)U34)-methyltransferase family. The protein in the C-terminal section; belongs to the DAO family. FAD serves as cofactor.

The protein localises to the cytoplasm. The catalysed reaction is 5-aminomethyl-2-thiouridine(34) in tRNA + S-adenosyl-L-methionine = 5-methylaminomethyl-2-thiouridine(34) in tRNA + S-adenosyl-L-homocysteine + H(+). Functionally, catalyzes the last two steps in the biosynthesis of 5-methylaminomethyl-2-thiouridine (mnm(5)s(2)U) at the wobble position (U34) in tRNA. Catalyzes the FAD-dependent demodification of cmnm(5)s(2)U34 to nm(5)s(2)U34, followed by the transfer of a methyl group from S-adenosyl-L-methionine to nm(5)s(2)U34, to form mnm(5)s(2)U34. The polypeptide is tRNA 5-methylaminomethyl-2-thiouridine biosynthesis bifunctional protein MnmC (Pseudomonas fluorescens (strain Pf0-1)).